Here is a 1718-residue protein sequence, read N- to C-terminus: PR domain zinc finger protein 2 (1718 aa).

One can recognise an SET domain in the interval 28–141 (EEVRLFPSAV…PGEELLVWYN (114 aa)). A disordered region spans residues 155–335 (ERASARSKRS…TSEETLEDCS (181 aa)). Basic residues predominate over residues 159 to 173 (ARSKRSSPKSRKGKK). Positions 189 to 202 (QLKTSEPDFTSANM) are enriched in polar residues. Basic and acidic residues predominate over residues 204 to 216 (DSAEGPKEDEEKP). Residues 265–297 (DLGEEEEEEEEEDEEEEEDDDDDELEDEGEEEA) are compositionally biased toward acidic residues. The tract at residues 294-316 (EEEASMPNENSVKEPEIRCDEKP) is retinoblastoma protein binding. The segment covering 304–327 (SVKEPEIRCDEKPEDLLEEPKTTS) has biased composition (basic and acidic residues). A Glycyl lysine isopeptide (Lys-Gly) (interchain with G-Cter in SUMO2) cross-link involves residue lysine 347. 2 C2H2-type zinc fingers span residues 360–382 (FPCQ…MHIH) and 390–412 (FKCK…ERRH). Positions 405 to 457 (RRRHERRHEAGLKRKPSQTLQPSEDLADGKASGENVASKDDSSPPSLGPDCLI) are disordered. Serine 421 is modified (phosphoserine). The C2H2-type 3 zinc-finger motif lies at 483 to 506 (HPCKYCKKVFGTHTNMRRHQRRVH). Disordered stretches follow at residues 513 to 550 (KGVR…EGEA) and 622 to 660 (EDLP…DPMV). Serine 643 carries the post-translational modification Phosphoserine. Glycyl lysine isopeptide (Lys-Gly) (interchain with G-Cter in SUMO2) cross-links involve residues lysine 651, lysine 690, and lysine 692. The tract at residues 729–797 (TSSRFKRRTS…GRDERETVSP (69 aa)) is disordered. The span at 738–748 (SSPPSSPQHSP) shows a compositional bias: low complexity. Residue serine 743 is modified to Phosphoserine. A Glycyl lysine isopeptide (Lys-Gly) (interchain with G-Cter in SUMO2) cross-link involves residue lysine 774. 3 positions are modified to phosphoserine: serine 781, serine 785, and serine 796. Residues lysine 866 and lysine 879 each participate in a glycyl lysine isopeptide (Lys-Gly) (interchain with G-Cter in SUMO2) cross-link. Residues 903 to 1083 (VENPADGTRS…SPPPLSAISS (181 aa)) are disordered. Positions 951 to 969 (LQTPSLSSGQLPPLLIPTD) are enriched in low complexity. 2 consecutive short sequence motifs (SH3-binding) follow at residues 970–979 (PSSPPPCPPV) and 985–998 (PPPP…LPAP). Residues 970–997 (PSSPPPCPPVLTVATPPPPLLPTVPLPA) are compositionally biased toward pro residues. Residues 1018–1027 (SPLPILSPTV) are compositionally biased toward low complexity. Positions 1028-1038 (SPSPSPIPPVE) are enriched in pro residues. The SH3-binding motif lies at 1028–1052 (SPSPSPIPPVEPLMSAASPGPPTLS). A compositionally biased stretch (low complexity) spans 1042 to 1072 (SAASPGPPTLSSSSSSSSSSSSFSSSSSSSS). C2H2-type zinc fingers lie at residues 1134-1156 (FVCN…LSIH), 1162-1185 (FKCE…FLLH), and 1191-1214 (FVCS…RDLH). Glycyl lysine isopeptide (Lys-Gly) (interchain with G-Cter in SUMO2) cross-links involve residues lysine 1147 and lysine 1151. Residues 1244-1265 (HMQSLPEDPLETSKEEEELNDS) are disordered. A compositionally biased stretch (acidic residues) spans 1251–1265 (DPLETSKEEEELNDS). Glycyl lysine isopeptide (Lys-Gly) (interchain with G-Cter in SUMO2) cross-links involve residues lysine 1257 and lysine 1281. The C2H2-type 7; atypical zinc finger occupies 1333-1355 (IRCTKCGKGVDNMPELHKHILAC). The C2H2-type 8; atypical zinc finger occupies 1455 to 1478 (HICPYCNREFTYIGSLNKHAAFSC). Disordered regions lie at residues 1478–1576 (CPKK…LRNS), 1589–1612 (GKKP…RSLH), and 1625–1652 (KSTL…VTRS). Over residues 1486 to 1498 (PKKKVSHSSKKGG) the composition is skewed to basic residues. Positions 1499–1511 (HSSPASSDKNSNS) are enriched in low complexity. Polar residues-rich tracts occupy residues 1525–1556 (QSMQ…SKQN) and 1599–1608 (HSAQLSSKTS). Residues 1635 to 1645 (DRFNIKSRERS) show a composition bias toward basic and acidic residues.

This sequence belongs to the class V-like SAM-binding methyltransferase superfamily. In terms of assembly, binds to the retinoblastoma protein (RB). Interacts with GATA3. As to expression, highly expressed in retinoblastoma cell lines and in brain tumors. Also expressed in a number of other cell lines and in brain, heart, skeletal muscle, liver and spleen. Isoform 1 is expressed in testis at much higher level than isoform 3.

The protein resides in the nucleus. The enzyme catalyses L-lysyl(9)-[histone H3] + 3 S-adenosyl-L-methionine = N(6),N(6),N(6)-trimethyl-L-lysyl(9)-[histone H3] + 3 S-adenosyl-L-homocysteine + 3 H(+). Its function is as follows. S-adenosyl-L-methionine-dependent histone methyltransferase that specifically methylates 'Lys-9' of histone H3. May function as a DNA-binding transcription factor. Binds to the macrophage-specific TPA-responsive element (MTE) of the HMOX1 (heme oxygenase 1) gene and may act as a transcriptional activator of this gene. This Homo sapiens (Human) protein is PR domain zinc finger protein 2 (PRDM2).